A 45-amino-acid chain; its full sequence is Toxin Bcs III 15.09 (45 aa).

The region spanning 2 to 44 (QGTACTGEHAHNFCLNGGTCRHIQSLGEYYCICPEGYTGHRCE) is the EGF-like domain. Cystine bridges form between Cys6/Cys21, Cys15/Cys32, and Cys34/Cys43.

The protein localises to the secreted. It is found in the nematocyst. Functionally, has both toxic and EGF activity. The protein is Toxin Bcs III 15.09 of Bunodosoma caissarum (Sea anemone).